The sequence spans 206 residues: GTP-binding protein YPT1 (206 aa).

Residue Met-1 is modified to N-acetylmethionine. Residues Ser-17–Cys-23, Tyr-33–Thr-40, Gly-66, and Asn-121–Asp-124 contribute to the GTP site. The S-palmitoyl cysteine moiety is linked to residue Cys-23. The Effector region motif lies at Tyr-37–Phe-45. The interaction with GDI1 stretch occupies residues Asp-63–Gly-80. Cys-123 carries the S-palmitoyl cysteine lipid modification. Residue Lys-144 forms a Glycyl lysine isopeptide (Lys-Gly) (interchain with G-Cter in ubiquitin) linkage. Ala-152–Leu-153 lines the GTP pocket. Phosphoserine occurs at positions 172 and 174. The disordered stretch occupies residues Met-173–Cys-206. Residues Gly-189–Gly-195 form an interaction with GDI1 region. Residues Cys-205 and Cys-206 are each lipidated (S-geranylgeranyl cysteine).

This sequence belongs to the small GTPase superfamily. Rab family. As to quaternary structure, forms a complex with the Rab escort protein (REP) MRS6, which is recognized by Rab geranylgeranyltransferase BET2-BET4. Interacts with the Rab GDP dissociation inhibitor GDI1, which can retrieve from and deliver to membranes the GDP-bound and prenylated form of YPT1. Interacts with YIP1, which is required for proper membrane targeting of prenylated YPT1. Interacts with YIF1, YIP3, YIP4 and YIP5. In terms of processing, prenylation is required for interaction with GDI1 and YIP1.

Its subcellular location is the endoplasmic reticulum membrane. The protein localises to the golgi apparatus membrane. The protein resides in the cytoplasm. It is found in the preautophagosomal structure membrane. Rab activation is generally mediated by a guanine exchange factor (GEF), while inactivation through hydrolysis of bound GTP is catalyzed by a GTPase activating protein (GAP). YPT1 is activated by the GEFs DSS4 and TRAPP complex, and inactivated by GAPs GYP1, GYP5 and GYP8. In terms of biological role, the small GTPases Rab are key regulators of intracellular membrane trafficking, from the formation of transport vesicles to their fusion with membranes. Rabs cycle between an inactive GDP-bound form and an active GTP-bound form that is able to recruit to membranes different set of downstream effectors directly responsible for vesicle formation, movement, tethering and fusion. YPT1 regulates the trafficking of secretory vesicles from the endoplasmic reticulum (ER) to the Golgi. Vesicular transport depends on shuttling of YPT1 between membrane and cytosol by GDI1, probably by recycling it to its membrane of origin after a vesicle fusion event. Plays a role in the initial events of the autophagic vacuole development which take place at specialized regions of the endoplasmic reticulum. Also involved in the recycling of membrane proteins. In Saccharomyces cerevisiae (strain ATCC 204508 / S288c) (Baker's yeast), this protein is GTP-binding protein YPT1 (YPT1).